An 892-amino-acid polypeptide reads, in one-letter code: Translation initiation factor IF-2 (892 aa).

The interval 65–296 (KTRSTLNIPS…KGKRKPSTLQ (232 aa)) is disordered. Residues 68–82 (STLNIPSTGGKSKSV) are compositionally biased toward polar residues. Basic and acidic residues predominate over residues 99–217 (EQAKAEEQAQ…KMAAENEGKW (119 aa)). A compositionally biased stretch (polar residues) spans 224 to 237 (QTESADYHVTTSQH). A compositionally biased stretch (basic and acidic residues) spans 239–254 (RAAEDENDAKVEGDRR). Basic residues predominate over residues 255 to 269 (SRTRGGKATKQKKGN). A compositionally biased stretch (basic and acidic residues) spans 270 to 283 (KLSESKADREEARA). One can recognise a tr-type G domain in the interval 391 to 560 (HRAPVVTIMG…LLQAEVLELK (170 aa)). A G1 region spans residues 400–407 (GHVDHGKT). 400-407 (GHVDHGKT) contacts GTP. The segment at 425–429 (GITQH) is G2. Positions 446-449 (DTPG) are G3. Residues 446–450 (DTPGH) and 500–503 (NKID) contribute to the GTP site. Positions 500–503 (NKID) are G4. A G5 region spans residues 536–538 (SAK).

It belongs to the TRAFAC class translation factor GTPase superfamily. Classic translation factor GTPase family. IF-2 subfamily.

It is found in the cytoplasm. Its function is as follows. One of the essential components for the initiation of protein synthesis. Protects formylmethionyl-tRNA from spontaneous hydrolysis and promotes its binding to the 30S ribosomal subunits. Also involved in the hydrolysis of GTP during the formation of the 70S ribosomal complex. This is Translation initiation factor IF-2 from Yersinia pseudotuberculosis serotype O:1b (strain IP 31758).